Reading from the N-terminus, the 293-residue chain is Large ribosomal subunit protein uL4c (293 aa).

The transit peptide at Met1–Ser50 directs the protein to the chloroplast. Disordered stretches follow at residues Glu107–Gly138 and Tyr259–Glu293. Positions Tyr116–Arg126 are enriched in basic residues. Residues Thr263–Glu293 show a composition bias toward acidic residues.

Belongs to the universal ribosomal protein uL4 family. As to quaternary structure, component of the chloroplast large ribosomal subunit (LSU). Mature 70S chloroplast ribosomes of higher plants consist of a small (30S) and a large (50S) subunit. The 30S small subunit contains 1 molecule of ribosomal RNA (16S rRNA) and 24 different proteins. The 50S large subunit contains 3 rRNA molecules (23S, 5S and 4.5S rRNA) and 33 different proteins. As to expression, highly expressed in cotyledon and weakly in roots.

It is found in the plastid. It localises to the chloroplast. Functionally, component of the chloroplast ribosome (chloro-ribosome), a dedicated translation machinery responsible for the synthesis of chloroplast genome-encoded proteins, including proteins of the transcription and translation machinery and components of the photosynthetic apparatus. The sequence is that of Large ribosomal subunit protein uL4c (RPL4) from Spinacia oleracea (Spinach).